Reading from the N-terminus, the 353-residue chain is Phospho-N-acetylmuramoyl-pentapeptide-transferase (353 aa).

10 helical membrane passes run 13 to 33, 66 to 86, 88 to 108, 130 to 150, 162 to 182, 193 to 213, 229 to 249, 256 to 276, 281 to 301, and 330 to 350; these read ILGY…FFTL, TPTM…LISI, FSNL…IIGF, LILQ…LSDF, PLFD…IATS, GLAT…IYIT, IGEV…FLWY, VFMG…LAII, ILLL…ILQV, and KIIV…LITL.

The protein belongs to the glycosyltransferase 4 family. MraY subfamily. The cofactor is Mg(2+).

The protein resides in the cell inner membrane. The enzyme catalyses UDP-N-acetyl-alpha-D-muramoyl-L-alanyl-gamma-D-glutamyl-meso-2,6-diaminopimeloyl-D-alanyl-D-alanine + di-trans,octa-cis-undecaprenyl phosphate = di-trans,octa-cis-undecaprenyl diphospho-N-acetyl-alpha-D-muramoyl-L-alanyl-D-glutamyl-meso-2,6-diaminopimeloyl-D-alanyl-D-alanine + UMP. The protein operates within cell wall biogenesis; peptidoglycan biosynthesis. Catalyzes the initial step of the lipid cycle reactions in the biosynthesis of the cell wall peptidoglycan: transfers peptidoglycan precursor phospho-MurNAc-pentapeptide from UDP-MurNAc-pentapeptide onto the lipid carrier undecaprenyl phosphate, yielding undecaprenyl-pyrophosphoryl-MurNAc-pentapeptide, known as lipid I. The chain is Phospho-N-acetylmuramoyl-pentapeptide-transferase from Sulfurimonas denitrificans (strain ATCC 33889 / DSM 1251) (Thiomicrospira denitrificans (strain ATCC 33889 / DSM 1251)).